The chain runs to 278 residues: Tryptophan synthase alpha chain (278 aa).

Residues glutamate 50 and aspartate 61 each act as proton acceptor in the active site.

The protein belongs to the TrpA family. As to quaternary structure, tetramer of two alpha and two beta chains.

The enzyme catalyses (1S,2R)-1-C-(indol-3-yl)glycerol 3-phosphate + L-serine = D-glyceraldehyde 3-phosphate + L-tryptophan + H2O. Its pathway is amino-acid biosynthesis; L-tryptophan biosynthesis; L-tryptophan from chorismate: step 5/5. In terms of biological role, the alpha subunit is responsible for the aldol cleavage of indoleglycerol phosphate to indole and glyceraldehyde 3-phosphate. The protein is Tryptophan synthase alpha chain of Rhodopseudomonas palustris (strain TIE-1).